The following is a 661-amino-acid chain: uncharacterized protein (661 aa).

An N-terminal signal peptide occupies residues 1–24 (MKTLKTLKIFIIVFIASVSLASFA). 6 helical membrane-spanning segments follow: residues 226-246 (IIGAALILYTMFFAFNMALNT), 254-274 (IALFVIKFLFVAYFSIGLGPL), 410-430 (IILAAGLVFSVIFLSILLYFI), 436-456 (CMITIYVMTYISPIFIPMALF), 469-489 (VCISCALQPAVVAGFIALLIT), and 562-582 (VVSILAELLCVLVFSVIFYYF). The segment at 629–661 (GKPLVGDKPGVGGKRKEGEQQGGDLASGSGGGK) is disordered.

This sequence belongs to the TrbL/VirB6 family.

It is found in the cell membrane. This is an uncharacterized protein from Rickettsia conorii (strain ATCC VR-613 / Malish 7).